Reading from the N-terminus, the 1053-residue chain is Carbamoyl phosphate synthase large chain (1053 aa).

Residues 1–397 (MPKRTDIKKV…SFMKAKRSID (397 aa)) form a carboxyphosphate synthetic domain region. 12 residues coordinate ATP: arginine 127, arginine 167, glycine 173, glycine 174, glutamate 206, valine 208, glutamate 213, glycine 239, isoleucine 240, histidine 241, glutamine 282, and glutamate 294. The region spanning 131-323 (RDLMNEIGEP…IARVAAKIAI (193 aa)) is the ATP-grasp 1 domain. Glutamine 282, glutamate 294, and asparagine 296 together coordinate Mg(2+). The Mn(2+) site is built by glutamine 282, glutamate 294, and asparagine 296. The tract at residues 398–530 (TDVRTHTSPS…YSTREGTSEI (133 aa)) is oligomerization domain. Residues 531–919 (VRDKKQKILI…YKACISADNE (389 aa)) form a carbamoyl phosphate synthetic domain region. Residues 661 to 852 (SVLLTTLQIP…IAKIAAKVMI (192 aa)) enclose the ATP-grasp 2 domain. ATP-binding residues include arginine 697, serine 736, leucine 738, glutamate 743, glycine 768, isoleucine 769, histidine 770, serine 771, glutamine 811, and glutamate 823. Mg(2+) contacts are provided by glutamine 811, glutamate 823, and asparagine 825. Positions 811, 823, and 825 each coordinate Mn(2+). Residues 918–1053 (NELPLKGNVF…TLEPLSHYLR (136 aa)) enclose the MGS-like domain. Positions 920 to 1053 (LPLKGNVFVS…TLEPLSHYLR (134 aa)) are allosteric domain.

The protein belongs to the CarB family. In terms of assembly, composed of two chains; the small (or glutamine) chain promotes the hydrolysis of glutamine to ammonia, which is used by the large (or ammonia) chain to synthesize carbamoyl phosphate. Tetramer of heterodimers (alpha,beta)4. Requires Mg(2+) as cofactor. Mn(2+) serves as cofactor.

It catalyses the reaction hydrogencarbonate + L-glutamine + 2 ATP + H2O = carbamoyl phosphate + L-glutamate + 2 ADP + phosphate + 2 H(+). It carries out the reaction hydrogencarbonate + NH4(+) + 2 ATP = carbamoyl phosphate + 2 ADP + phosphate + 2 H(+). It participates in amino-acid biosynthesis; L-arginine biosynthesis; carbamoyl phosphate from bicarbonate: step 1/1. It functions in the pathway pyrimidine metabolism; UMP biosynthesis via de novo pathway; (S)-dihydroorotate from bicarbonate: step 1/3. Functionally, large subunit of the glutamine-dependent carbamoyl phosphate synthetase (CPSase). CPSase catalyzes the formation of carbamoyl phosphate from the ammonia moiety of glutamine, carbonate, and phosphate donated by ATP, constituting the first step of 2 biosynthetic pathways, one leading to arginine and/or urea and the other to pyrimidine nucleotides. The large subunit (synthetase) binds the substrates ammonia (free or transferred from glutamine from the small subunit), hydrogencarbonate and ATP and carries out an ATP-coupled ligase reaction, activating hydrogencarbonate by forming carboxy phosphate which reacts with ammonia to form carbamoyl phosphate. The chain is Carbamoyl phosphate synthase large chain from Methanoregula boonei (strain DSM 21154 / JCM 14090 / 6A8).